The chain runs to 212 residues: Putative inactive 6-phospho-alpha-glucosidase (212 aa).

4 to 70 serves as a coordination point for NAD(+); sequence FSVVVAGGGS…PDIAFSYTTD (67 aa). Mn(2+) is bound by residues cysteine 169 and histidine 200.

Belongs to the glycosyl hydrolase 4 family.

In Escherichia coli (strain K12), this protein is Putative inactive 6-phospho-alpha-glucosidase.